We begin with the raw amino-acid sequence, 211 residues long: Ribosomal RNA small subunit methyltransferase G (211 aa).

Residues Gly72, Phe77, 125-126 (IE), and Arg141 each bind S-adenosyl-L-methionine.

Belongs to the methyltransferase superfamily. RNA methyltransferase RsmG family.

It localises to the cytoplasm. It carries out the reaction guanosine(527) in 16S rRNA + S-adenosyl-L-methionine = N(7)-methylguanosine(527) in 16S rRNA + S-adenosyl-L-homocysteine. In terms of biological role, specifically methylates the N7 position of guanine in position 527 of 16S rRNA. The sequence is that of Ribosomal RNA small subunit methyltransferase G from Allorhizobium ampelinum (strain ATCC BAA-846 / DSM 112012 / S4) (Agrobacterium vitis (strain S4)).